The sequence spans 235 residues: Thiamine import ATP-binding protein ThiQ (235 aa).

The ABC transporter domain maps to 2–230; that stretch reads LKLIDITWLY…QASASALLGI (229 aa). Residue 32–39 coordinates ATP; sequence GPSGAGKS.

It belongs to the ABC transporter superfamily. Thiamine importer (TC 3.A.1.19.1) family. In terms of assembly, the complex is composed of two ATP-binding proteins (ThiQ), two transmembrane proteins (ThiP) and a solute-binding protein (ThiB).

Its subcellular location is the cell inner membrane. It catalyses the reaction thiamine(out) + ATP + H2O = thiamine(in) + ADP + phosphate + H(+). Functionally, part of the ABC transporter complex ThiBPQ involved in thiamine import. Responsible for energy coupling to the transport system. The polypeptide is Thiamine import ATP-binding protein ThiQ (Salmonella paratyphi A (strain ATCC 9150 / SARB42)).